We begin with the raw amino-acid sequence, 324 residues long: Glutathione synthetase (324 aa).

Residues 125–312 (EKLFTTTHFP…ISTIILDNLE (188 aa)) form the ATP-grasp domain. 152 to 209 (FIKTYKDIIIKPLHGMAGLSIFRIKEHDPNTSVIIETMTKYETIPCISQNYITDIQKG) provides a ligand contact to ATP. Residues E283 and N285 each contribute to the Mg(2+) site.

The protein belongs to the prokaryotic GSH synthase family. It depends on Mg(2+) as a cofactor. Mn(2+) is required as a cofactor.

The catalysed reaction is gamma-L-glutamyl-L-cysteine + glycine + ATP = glutathione + ADP + phosphate + H(+). The protein operates within sulfur metabolism; glutathione biosynthesis; glutathione from L-cysteine and L-glutamate: step 2/2. The chain is Glutathione synthetase from Buchnera aphidicola subsp. Baizongia pistaciae (strain Bp).